Consider the following 301-residue polypeptide: D-alanine--D-alanine ligase (301 aa).

Residues 101 to 296 (KLMWRAAGLA…YPTLVRRVLE (196 aa)) enclose the ATP-grasp domain. 127 to 182 (EEELGLPLFVKPAREGSSIGVTKVKERGALKAAYEEAARHDPLVIAEKGVMGGEYT) is an ATP binding site. Residues Asp250, Glu263, and Asn265 each coordinate Mg(2+).

This sequence belongs to the D-alanine--D-alanine ligase family. Mg(2+) is required as a cofactor. The cofactor is Mn(2+).

The protein resides in the cytoplasm. The enzyme catalyses 2 D-alanine + ATP = D-alanyl-D-alanine + ADP + phosphate + H(+). It functions in the pathway cell wall biogenesis; peptidoglycan biosynthesis. Its function is as follows. Cell wall formation. This chain is D-alanine--D-alanine ligase, found in Dechloromonas aromatica (strain RCB).